Consider the following 585-residue polypeptide: Nitrogen permease regulator 3-like protein (585 aa).

The segment at 117 to 157 (GEWAKRRKPRTTVESNASSSHLVSKPESSHPSTGSFEVKSS) is disordered. Over residues 128–138 (TVESNASSSHL) the composition is skewed to polar residues. The span at 148–157 (STGSFEVKSS) shows a compositional bias: low complexity.

Belongs to the NPR3 family.

The protein is Nitrogen permease regulator 3-like protein of Schizosaccharomyces pombe (strain 972 / ATCC 24843) (Fission yeast).